A 330-amino-acid polypeptide reads, in one-letter code: Aspartate--ammonia ligase (330 aa).

This sequence belongs to the class-II aminoacyl-tRNA synthetase family. AsnA subfamily.

Its subcellular location is the cytoplasm. The catalysed reaction is L-aspartate + NH4(+) + ATP = L-asparagine + AMP + diphosphate + H(+). Its pathway is amino-acid biosynthesis; L-asparagine biosynthesis; L-asparagine from L-aspartate (ammonia route): step 1/1. The sequence is that of Aspartate--ammonia ligase from Shigella flexneri serotype 5b (strain 8401).